An 878-amino-acid polypeptide reads, in one-letter code: Staphylococcal nuclease domain-containing protein 1 (878 aa).

2 TNase-like domains span residues glutamine 3–proline 142 and lysine 167–asparagine 312. Residue serine 316 is modified to Phosphoserine. TNase-like domains lie at lysine 326–glycine 464 and arginine 493–aspartate 626. The Tudor domain occupies lysine 695–leucine 755.

The protein resides in the cytoplasm. It is found in the cytosol. The sequence is that of Staphylococcal nuclease domain-containing protein 1 from Schizosaccharomyces pombe (strain 972 / ATCC 24843) (Fission yeast).